Consider the following 493-residue polypeptide: Galactose-1-phosphate uridylyltransferase (493 aa).

Belongs to the galactose-1-phosphate uridylyltransferase type 2 family.

It localises to the cytoplasm. It catalyses the reaction alpha-D-galactose 1-phosphate + UDP-alpha-D-glucose = alpha-D-glucose 1-phosphate + UDP-alpha-D-galactose. It participates in carbohydrate metabolism; galactose metabolism. In Streptococcus salivarius, this protein is Galactose-1-phosphate uridylyltransferase.